The chain runs to 414 residues: Histidine--tRNA ligase (414 aa).

The protein belongs to the class-II aminoacyl-tRNA synthetase family. In terms of assembly, homodimer.

It is found in the cytoplasm. The catalysed reaction is tRNA(His) + L-histidine + ATP = L-histidyl-tRNA(His) + AMP + diphosphate + H(+). This chain is Histidine--tRNA ligase, found in Endomicrobium trichonymphae.